A 45-amino-acid chain; its full sequence is Lysis protein for colicin E1* (45 aa).

A signal peptide spans 1–17; it reads MRKRFFVGIFAINLLVG. Cysteine 18 is lipidated: N-palmitoyl cysteine. A lipid anchor (S-diacylglycerol cysteine) is attached at cysteine 18.

Its subcellular location is the cell outer membrane. Functionally, lysis proteins are required for both colicin release and partial cell lysis. The polypeptide is Lysis protein for colicin E1* (kil) (Shigella sonnei).